Reading from the N-terminus, the 308-residue chain is Bifunctional protein FolD (308 aa).

Residues 171–173 (GRS), Ser-198, and Ile-239 each bind NADP(+).

The protein belongs to the tetrahydrofolate dehydrogenase/cyclohydrolase family. As to quaternary structure, homodimer.

The catalysed reaction is (6R)-5,10-methylene-5,6,7,8-tetrahydrofolate + NADP(+) = (6R)-5,10-methenyltetrahydrofolate + NADPH. The enzyme catalyses (6R)-5,10-methenyltetrahydrofolate + H2O = (6R)-10-formyltetrahydrofolate + H(+). The protein operates within one-carbon metabolism; tetrahydrofolate interconversion. Functionally, catalyzes the oxidation of 5,10-methylenetetrahydrofolate to 5,10-methenyltetrahydrofolate and then the hydrolysis of 5,10-methenyltetrahydrofolate to 10-formyltetrahydrofolate. The protein is Bifunctional protein FolD of Borreliella burgdorferi (strain ATCC 35210 / DSM 4680 / CIP 102532 / B31) (Borrelia burgdorferi).